We begin with the raw amino-acid sequence, 152 residues long: Ubiquitin-activating enzyme E1 Y (152 aa).

Cys51 functions as the Glycyl thioester intermediate in the catalytic mechanism.

It belongs to the ubiquitin-activating E1 family. Monomer.

The enzyme catalyses ATP + ubiquitin + [E1 ubiquitin-activating enzyme]-L-cysteine = AMP + diphosphate + S-ubiquitinyl-[E1 ubiquitin-activating enzyme]-L-cysteine.. Its pathway is protein modification; protein ubiquitination. Functionally, activates ubiquitin by first adenylating its C-terminal glycine residue with ATP, and thereafter linking this residue to the side chain of a cysteine residue in E1, yielding a ubiquitin-E1 thioester and free AMP. The Y chromosome form could be involved in the survival and proliferation of differentiating spermatogonia. In Osphranter rufus (Red kangaroo), this protein is Ubiquitin-activating enzyme E1 Y (UBE1Y).